Consider the following 83-residue polypeptide: Exodeoxyribonuclease 7 small subunit (83 aa).

The protein belongs to the XseB family. Heterooligomer composed of large and small subunits.

Its subcellular location is the cytoplasm. It catalyses the reaction Exonucleolytic cleavage in either 5'- to 3'- or 3'- to 5'-direction to yield nucleoside 5'-phosphates.. Its function is as follows. Bidirectionally degrades single-stranded DNA into large acid-insoluble oligonucleotides, which are then degraded further into small acid-soluble oligonucleotides. The chain is Exodeoxyribonuclease 7 small subunit from Rhizobium rhizogenes (strain K84 / ATCC BAA-868) (Agrobacterium radiobacter).